Here is a 466-residue protein sequence, read N- to C-terminus: Glutamate--tRNA ligase (466 aa).

The short motif at 10–20 is the 'HIGH' region element; it reads PSPTGYLHVGG. Zn(2+)-binding residues include cysteine 99, cysteine 101, cysteine 126, and aspartate 128. The 'KMSKS' region signature appears at 237 to 241; it reads RLSKR. An ATP-binding site is contributed by lysine 240.

It belongs to the class-I aminoacyl-tRNA synthetase family. Glutamate--tRNA ligase type 1 subfamily. In terms of assembly, monomer. Requires Zn(2+) as cofactor.

It is found in the cytoplasm. It catalyses the reaction tRNA(Glu) + L-glutamate + ATP = L-glutamyl-tRNA(Glu) + AMP + diphosphate. Catalyzes the attachment of glutamate to tRNA(Glu) in a two-step reaction: glutamate is first activated by ATP to form Glu-AMP and then transferred to the acceptor end of tRNA(Glu). In Geobacter sulfurreducens (strain ATCC 51573 / DSM 12127 / PCA), this protein is Glutamate--tRNA ligase.